The sequence spans 70 residues: Large ribosomal subunit protein bL31 (70 aa).

Zn(2+)-binding residues include Cys16, Cys18, Cys38, and Cys41.

It belongs to the bacterial ribosomal protein bL31 family. Type A subfamily. In terms of assembly, part of the 50S ribosomal subunit. Requires Zn(2+) as cofactor.

Functionally, binds the 23S rRNA. This Vesicomyosocius okutanii subsp. Calyptogena okutanii (strain HA) protein is Large ribosomal subunit protein bL31.